Consider the following 234-residue polypeptide: Staphylococcal superantigen-like 5 (234 aa).

Residues 1-30 (MKMTAIAKASLALGILATGTITSLHQTVNA) form the signal peptide.

It belongs to the staphylococcal/streptococcal toxin family. As to quaternary structure, interacts with host SELPLG; this interaction prevents SELPLG-mediated neutrophil rolling. Interacts with host MMP9 (via sialic acid-containing O-glycans); this interaction inhibits MMP9 activity. Interacts with host GP1BA and GP6; these interactions play an important role in platelet binding and activation.

Secreted protein that plays a role in the inhibition of host innate immune system. Modulates the interaction between host SELPLG and P-selectin thereby preventing initial rolling of neutrophils toward the site of infection. Interferes with leukocyte trafficking by inhibiting host metalloproteinase-9/MMP9 activity. Also associates with two different platelet surface receptors GP1A and GP6 leading to platelet activation and aggregation. The protein is Staphylococcal superantigen-like 5 of Staphylococcus aureus (strain NCTC 8325 / PS 47).